Consider the following 456-residue polypeptide: Bifunctional protein GlmU (456 aa).

A pyrophosphorylase region spans residues Met-1–Arg-229. Residues Leu-11–Gly-14, Lys-25, Gln-76, Gly-81–Thr-82, Tyr-103–Asp-105, Gly-140, Glu-154, Asn-169, and Asn-227 contribute to the UDP-N-acetyl-alpha-D-glucosamine site. Residue Asp-105 participates in Mg(2+) binding. A Mg(2+)-binding site is contributed by Asn-227. Positions Leu-230 to Ala-250 are linker. Residues Gly-251–Lys-456 form an N-acetyltransferase region. UDP-N-acetyl-alpha-D-glucosamine contacts are provided by Arg-333 and Lys-351. His-363 acts as the Proton acceptor in catalysis. UDP-N-acetyl-alpha-D-glucosamine contacts are provided by Tyr-366 and Asn-377. Residues Ala-380, Asn-386–Tyr-387, Ser-405, Ala-423, and Arg-440 contribute to the acetyl-CoA site.

The protein in the N-terminal section; belongs to the N-acetylglucosamine-1-phosphate uridyltransferase family. In the C-terminal section; belongs to the transferase hexapeptide repeat family. As to quaternary structure, homotrimer. Mg(2+) is required as a cofactor.

It localises to the cytoplasm. It carries out the reaction alpha-D-glucosamine 1-phosphate + acetyl-CoA = N-acetyl-alpha-D-glucosamine 1-phosphate + CoA + H(+). The catalysed reaction is N-acetyl-alpha-D-glucosamine 1-phosphate + UTP + H(+) = UDP-N-acetyl-alpha-D-glucosamine + diphosphate. Its pathway is nucleotide-sugar biosynthesis; UDP-N-acetyl-alpha-D-glucosamine biosynthesis; N-acetyl-alpha-D-glucosamine 1-phosphate from alpha-D-glucosamine 6-phosphate (route II): step 2/2. It participates in nucleotide-sugar biosynthesis; UDP-N-acetyl-alpha-D-glucosamine biosynthesis; UDP-N-acetyl-alpha-D-glucosamine from N-acetyl-alpha-D-glucosamine 1-phosphate: step 1/1. The protein operates within bacterial outer membrane biogenesis; LPS lipid A biosynthesis. Its function is as follows. Catalyzes the last two sequential reactions in the de novo biosynthetic pathway for UDP-N-acetylglucosamine (UDP-GlcNAc). The C-terminal domain catalyzes the transfer of acetyl group from acetyl coenzyme A to glucosamine-1-phosphate (GlcN-1-P) to produce N-acetylglucosamine-1-phosphate (GlcNAc-1-P), which is converted into UDP-GlcNAc by the transfer of uridine 5-monophosphate (from uridine 5-triphosphate), a reaction catalyzed by the N-terminal domain. The protein is Bifunctional protein GlmU of Shigella boydii serotype 18 (strain CDC 3083-94 / BS512).